A 277-amino-acid chain; its full sequence is Large ribosomal subunit protein uL2 (277 aa).

Residues 219–277 form a disordered region; that stretch reads TVRGSVMNPNDHPHGGGEGRAPIGRKSPMSPWGKPTLGFKTRKKKNKSDKFIVRRRKNK. Over residues 258 to 277 the composition is skewed to basic residues; the sequence is KTRKKKNKSDKFIVRRRKNK.

It belongs to the universal ribosomal protein uL2 family. As to quaternary structure, part of the 50S ribosomal subunit. Forms a bridge to the 30S subunit in the 70S ribosome.

In terms of biological role, one of the primary rRNA binding proteins. Required for association of the 30S and 50S subunits to form the 70S ribosome, for tRNA binding and peptide bond formation. It has been suggested to have peptidyltransferase activity; this is somewhat controversial. Makes several contacts with the 16S rRNA in the 70S ribosome. The sequence is that of Large ribosomal subunit protein uL2 from Bacillus subtilis (strain 168).